The sequence spans 171 residues: Ribosome-binding factor A (171 aa).

Low complexity predominate over residues 120-132 (AALAAAAQPAGDP). The interval 120–171 (AALAAAAQPAGDPDPYKKPVDHTDDWDEDDEDDRDGDDAVDALDAAADVPRL) is disordered. Positions 133-142 (DPYKKPVDHT) are enriched in basic and acidic residues. The segment covering 143–160 (DDWDEDDEDDRDGDDAVD) has biased composition (acidic residues). Low complexity predominate over residues 161–171 (ALDAAADVPRL).

Belongs to the RbfA family. Monomer. Binds 30S ribosomal subunits, but not 50S ribosomal subunits or 70S ribosomes.

Its subcellular location is the cytoplasm. One of several proteins that assist in the late maturation steps of the functional core of the 30S ribosomal subunit. Associates with free 30S ribosomal subunits (but not with 30S subunits that are part of 70S ribosomes or polysomes). Required for efficient processing of 16S rRNA. May interact with the 5'-terminal helix region of 16S rRNA. This chain is Ribosome-binding factor A, found in Kineococcus radiotolerans (strain ATCC BAA-149 / DSM 14245 / SRS30216).